The following is a 237-amino-acid chain: Oil body-associated protein 2C (237 aa).

This sequence belongs to the OBAP family.

The sequence is that of Oil body-associated protein 2C from Arabidopsis thaliana (Mouse-ear cress).